The primary structure comprises 386 residues: Trichocyst matrix protein T2-B (386 aa).

Residues 1–19 form the signal peptide; it reads MKTIILALALIALVSSTQS. Residues 20–48 constitute a propeptide that is removed on maturation; that stretch reads DVIDTIKKIDQSPFGRTLFDTIWLELQTG. A coiled-coil region spans residues 51 to 154; the sequence is LDRLVSTLTD…AEEHEDFEEK (104 aa). The propeptide occupies 184–238; that stretch reads KGKAAKQPHKFTKDVANLIQKHFTTSAKKTAKFQHRKGYSKLFKAFATIASKVEQ. Residues 294-325 are a coiled coil; sequence ALANAISDLAALNDIIAQVEASLDTTVQRIEN.

Belongs to the TMP family.

Its subcellular location is the trichocyst. In terms of biological role, structural protein that crystallize inside the trichocyst matrix. This chain is Trichocyst matrix protein T2-B (T2B), found in Paramecium tetraurelia.